Consider the following 250-residue polypeptide: NAD-dependent protein deacylase (250 aa).

The Deacetylase sirtuin-type domain maps to Met-1–Ile-248. Gly-20–Trp-39 lines the NAD(+) pocket. Substrate is bound by residues Tyr-64 and Arg-67. Gln-98–Asp-101 serves as a coordination point for NAD(+). His-116 serves as the catalytic Proton acceptor. Residues Cys-124, Cys-127, Cys-150, and Cys-153 each contribute to the Zn(2+) site. Residues Gly-190–Ser-192, Asn-216–Glu-218, and Ala-234 each bind NAD(+).

This sequence belongs to the sirtuin family. Class III subfamily. Zn(2+) serves as cofactor.

It is found in the cytoplasm. The catalysed reaction is N(6)-acetyl-L-lysyl-[protein] + NAD(+) + H2O = 2''-O-acetyl-ADP-D-ribose + nicotinamide + L-lysyl-[protein]. It catalyses the reaction N(6)-succinyl-L-lysyl-[protein] + NAD(+) + H2O = 2''-O-succinyl-ADP-D-ribose + nicotinamide + L-lysyl-[protein]. Functionally, NAD-dependent lysine deacetylase and desuccinylase that specifically removes acetyl and succinyl groups on target proteins. Modulates the activities of several proteins which are inactive in their acylated form. Deacetylates the N-terminal lysine residue of Alba, the major archaeal chromatin protein and that, in turn, increases Alba's DNA binding affinity, thereby repressing transcription. This chain is NAD-dependent protein deacylase, found in Pyrococcus furiosus (strain ATCC 43587 / DSM 3638 / JCM 8422 / Vc1).